A 120-amino-acid polypeptide reads, in one-letter code: MKQTRTAARQSRHQRIRRKVKGTSDRPRLAVFRSHQHIYAQVIDDTRHHTLVAASSLEPELRQKLGKGSTCAASIAVGRLIAERAKAAGIERVVFDRGGNIYHGRVKALADAAREGGLDF.

Positions 1 to 25 (MKQTRTAARQSRHQRIRRKVKGTSD) are disordered. The span at 10–21 (QSRHQRIRRKVK) shows a compositional bias: basic residues.

The protein belongs to the universal ribosomal protein uL18 family. Part of the 50S ribosomal subunit; part of the 5S rRNA/L5/L18/L25 subcomplex. Contacts the 5S and 23S rRNAs.

Functionally, this is one of the proteins that bind and probably mediate the attachment of the 5S RNA into the large ribosomal subunit, where it forms part of the central protuberance. The protein is Large ribosomal subunit protein uL18 of Thermosynechococcus vestitus (strain NIES-2133 / IAM M-273 / BP-1).